A 60-amino-acid chain; its full sequence is Large ribosomal subunit protein bL32 (60 aa).

This sequence belongs to the bacterial ribosomal protein bL32 family.

The sequence is that of Large ribosomal subunit protein bL32 from Ehrlichia ruminantium (strain Gardel).